The following is a 290-amino-acid chain: Small ribosomal subunit biogenesis GTPase RsgA (290 aa).

Residues 62–219 form the CP-type G domain; the sequence is DNYLIRPQVA…VVDTPGFSTL (158 aa). GTP-binding positions include 111-114 and 162-170; these read NKID and GPSGVGKST. 4 residues coordinate Zn(2+): cysteine 243, cysteine 248, histidine 250, and cysteine 256.

It belongs to the TRAFAC class YlqF/YawG GTPase family. RsgA subfamily. Monomer. Associates with 30S ribosomal subunit, binds 16S rRNA. Zn(2+) is required as a cofactor.

The protein resides in the cytoplasm. Functionally, one of several proteins that assist in the late maturation steps of the functional core of the 30S ribosomal subunit. Helps release RbfA from mature subunits. May play a role in the assembly of ribosomal proteins into the subunit. Circularly permuted GTPase that catalyzes slow GTP hydrolysis, GTPase activity is stimulated by the 30S ribosomal subunit. In Clostridium novyi (strain NT), this protein is Small ribosomal subunit biogenesis GTPase RsgA.